The following is a 323-amino-acid chain: Putative CRISPR-associated protein SSO1401 (323 aa).

As to quaternary structure, sometimes seen associated with the aCascade ribonucleoprotein complex, minimally composed of Csa2 and Cas5a, which binds crRNA. Other probable components of aCascade in strain P1 are Cas6 and Csa5, while SSO1399, Cas5b (SSO1400) and SSO1401 have sometimes been seen weakly associated. The Csa2-Cas5a-crRNA complex also binds target DNA homologous to crRNA, probably forming an R-loop. Purified aCascade forms a filament about 6 nm in width.

Functionally, CRISPR (clustered regularly interspaced short palindromic repeat) is an adaptive immune system that provides protection against mobile genetic elements (viruses, transposable elements and conjugative plasmids). CRISPR clusters contain spacers, sequences complementary to antecedent mobile elements, and target invading nucleic acids. CRISPR clusters are transcribed and processed into CRISPR RNA (crRNA). In Saccharolobus solfataricus (strain ATCC 35092 / DSM 1617 / JCM 11322 / P2) (Sulfolobus solfataricus), this protein is Putative CRISPR-associated protein SSO1401.